We begin with the raw amino-acid sequence, 302 residues long: MPINIPKDLPAKEILEQENIFVMDEERAYSQDIRPLNIIILNLMPEKEKAETQLLRLLGNSPLQVNVTFLRPATHEPKTTSKHHLEQFYTIFPHIRHRKFDGMIITGAPVEQMPFEEVNYWGELTEIMEWTKTNVTSTLHICWGAQAGLYYHYGIPKYPLPEKCFGVFNHTVEVKNVKLLRGFDDVFRMPHSRHTDVKREDIEKVPDLTILSMSDKAGVCLVASNDGRRIFLTGHPEYDATTLKEEYERDLAKGLPIHIPESYFPNDDPSQPPLNTWRSHANLLFVNWLNYYVYQETPYEWE.

Cys-142 acts as the Acyl-thioester intermediate in catalysis. 2 residues coordinate substrate: Lys-163 and Ser-192. His-235 serves as the catalytic Proton acceptor. The active site involves Glu-237. Arg-249 provides a ligand contact to substrate.

This sequence belongs to the MetA family.

It localises to the cytoplasm. The enzyme catalyses L-homoserine + acetyl-CoA = O-acetyl-L-homoserine + CoA. It participates in amino-acid biosynthesis; L-methionine biosynthesis via de novo pathway; O-acetyl-L-homoserine from L-homoserine: step 1/1. Its function is as follows. Transfers an acetyl group from acetyl-CoA to L-homoserine, forming acetyl-L-homoserine. In Geobacillus kaustophilus (strain HTA426), this protein is Homoserine O-acetyltransferase.